A 644-amino-acid chain; its full sequence is MSLIECKNINRYFGSGENRVHILKDISLSIEKGDFVAIIGQSGSGKSTLMNILGCLDTAGSGSYRIDGIETAKMQPDELAALRRERFGFIFQRYNLLSSLTARDNVALPAVYMGMGGKERSARADKLLQDLGLASKEGNKPGELSGGQQQRVSIARALMNGGEIIFADEPTGALDTASGKNVMEIIRRLHEAGHTVIMVTHDPGIAANANRVIEIRDGEIISDTSKNPEIPASNVGRIQEKASWSFYYDQFVEAFRMSVQAVLAHKMRSLLTMLGIIIGIASVVSVVALGNGSQKKILEDISSMGTNTISIFPGRGFGDRRSGKIKTLTIDDAKIIAKQSYVASATPMTSSGGTLTYRNTDLTASLYGVGEQYFDVRGLKLETGRLFDENDVKEDAQVVVIDQNVKDKLFADSDPLGKTILFRKRPLTVIGVMKKDENAFGNSDVLMLWSPYTTVMHQITGESHTNSITVKIKDNANTRVAEKGLAELLKARHGTEDFFMNNSDSIRQMVESTTGTMKLLISSIALISLVVGGIGVMNIMLVSVTERTKEIGIRMAIGARRGNILQQFLIEAVLICIIGGLVGVGLSAAVSLVFNHFVTDFPMDISAASVIGAVACSTGIGIAFGFMPANKAAKLNPIDALAQD.

An ABC transporter domain is found at 4 to 242; it reads IECKNINRYF…SNVGRIQEKA (239 aa). Residue 40–47 participates in ATP binding; it reads GQSGSGKS. A run of 4 helical transmembrane segments spans residues 270–290, 524–544, 574–594, and 607–627; these read LLTMLGIIIGIASVVSVVALG, IALISLVVGGIGVMNIMLVSV, LICIIGGLVGVGLSAAVSLVF, and AASVIGAVACSTGIGIAFGFM.

Belongs to the ABC transporter superfamily. Macrolide exporter (TC 3.A.1.122) family. Homodimer.

The protein resides in the cell inner membrane. Functionally, non-canonical ABC transporter that contains transmembrane domains (TMD), which form a pore in the inner membrane, and an ATP-binding domain (NBD), which is responsible for energy generation. Overexpression confers resistance against macrolides. The polypeptide is Macrolide export ATP-binding/permease protein MacB (Neisseria gonorrhoeae).